Reading from the N-terminus, the 447-residue chain is ATP-dependent protease ATPase subunit HslU (447 aa).

ATP-binding positions include Ile17 and 59-64 (GVGKTE). Residues 136–160 (PPARGGFQGEPTAEEKPTEKKESAT) form a disordered region. Basic and acidic residues predominate over residues 148 to 159 (AEEKPTEKKESA). Asp260, Glu325, and Arg397 together coordinate ATP.

It belongs to the ClpX chaperone family. HslU subfamily. In terms of assembly, a double ring-shaped homohexamer of HslV is capped on each side by a ring-shaped HslU homohexamer. The assembly of the HslU/HslV complex is dependent on binding of ATP.

It is found in the cytoplasm. In terms of biological role, ATPase subunit of a proteasome-like degradation complex; this subunit has chaperone activity. The binding of ATP and its subsequent hydrolysis by HslU are essential for unfolding of protein substrates subsequently hydrolyzed by HslV. HslU recognizes the N-terminal part of its protein substrates and unfolds these before they are guided to HslV for hydrolysis. This is ATP-dependent protease ATPase subunit HslU from Coxiella burnetii (strain RSA 331 / Henzerling II).